Here is a 336-residue protein sequence, read N- to C-terminus: Peroxidase 72 (336 aa).

Residues 1 to 23 (MAKSLNILIAALSLIAFSPFCLC) form the signal peptide. 4 disulfides stabilise this stretch: Cys-42-Cys-122, Cys-75-Cys-80, Cys-128-Cys-329, and Cys-207-Cys-239. The active-site Proton acceptor is the His-73. 5 residues coordinate Ca(2+): Asp-74, Val-77, Gly-79, Asp-81, and Ser-83. Residue Pro-170 coordinates substrate. The N-linked (GlcNAc...) asparagine glycan is linked to Asn-173. His-200 lines the heme b pocket. A Ca(2+)-binding site is contributed by Thr-201. Asn-216 carries N-linked (GlcNAc...) asparagine glycosylation. Ca(2+)-binding residues include Asp-252, Thr-255, and Asp-260.

It belongs to the peroxidase family. Classical plant (class III) peroxidase subfamily. It depends on heme b as a cofactor. Requires Ca(2+) as cofactor. In terms of tissue distribution, slightly expressed in roots.

It localises to the secreted. It carries out the reaction 2 a phenolic donor + H2O2 = 2 a phenolic radical donor + 2 H2O. Removal of H(2)O(2), oxidation of toxic reductants, biosynthesis and degradation of lignin, suberization, auxin catabolism, response to environmental stresses such as wounding, pathogen attack and oxidative stress. These functions might be dependent on each isozyme/isoform in each plant tissue. In Arabidopsis thaliana (Mouse-ear cress), this protein is Peroxidase 72 (PER72).